Here is a 182-residue protein sequence, read N- to C-terminus: A-type ATP synthase subunit E (182 aa).

The protein belongs to the V-ATPase E subunit family. Has multiple subunits with at least A(3), B(3), C, D, E, F, H, I and proteolipid K(x).

It is found in the cell membrane. Component of the A-type ATP synthase that produces ATP from ADP in the presence of a proton gradient across the membrane. This is A-type ATP synthase subunit E from Methanothrix thermoacetophila (strain DSM 6194 / JCM 14653 / NBRC 101360 / PT) (Methanosaeta thermophila).